Reading from the N-terminus, the 263-residue chain is Small ribosomal subunit protein uS2 (263 aa).

Basic and acidic residues predominate over residues 230-249; that stretch reads GEALVNEEKEITDEEKKEVL. The tract at residues 230–263 is disordered; sequence GEALVNEEKEITDEEKKEVLDEAMSEEDFGEEQE. Residues 250–263 show a composition bias toward acidic residues; it reads DEAMSEEDFGEEQE.

This sequence belongs to the universal ribosomal protein uS2 family.

In Campylobacter jejuni subsp. jejuni serotype O:2 (strain ATCC 700819 / NCTC 11168), this protein is Small ribosomal subunit protein uS2.